The chain runs to 158 residues: MSYTVIYAGTFDPMTNGHLDIIERASELFGQVIVAVAKNPSKQPLFSLEERTALVRQSCAHLANVQAVGFSGLLADFAKQHQAKALVRGIRGSDDIEYEIRLAQLNDKLSGRLDTVFLPPSVTWRYLSSTMVREIYRHQGDVAQFVPNAVLCALKEKE.

Residue Thr10 coordinates substrate. ATP is bound by residues 10–11 (TF) and His18. Lys42, Leu74, and Arg88 together coordinate substrate. ATP is bound by residues 89 to 91 (GIR), Glu99, and 124 to 130 (WRYLSST).

The protein belongs to the bacterial CoaD family. In terms of assembly, homohexamer. The cofactor is Mg(2+).

It is found in the cytoplasm. It catalyses the reaction (R)-4'-phosphopantetheine + ATP + H(+) = 3'-dephospho-CoA + diphosphate. It participates in cofactor biosynthesis; coenzyme A biosynthesis; CoA from (R)-pantothenate: step 4/5. Its function is as follows. Reversibly transfers an adenylyl group from ATP to 4'-phosphopantetheine, yielding dephospho-CoA (dPCoA) and pyrophosphate. In Actinobacillus pleuropneumoniae serotype 7 (strain AP76), this protein is Phosphopantetheine adenylyltransferase.